The primary structure comprises 172 residues: Large ribosomal subunit protein uL10 (172 aa).

Belongs to the universal ribosomal protein uL10 family. Part of the ribosomal stalk of the 50S ribosomal subunit. The N-terminus interacts with L11 and the large rRNA to form the base of the stalk. The C-terminus forms an elongated spine to which L12 dimers bind in a sequential fashion forming a multimeric L10(L12)X complex.

In terms of biological role, forms part of the ribosomal stalk, playing a central role in the interaction of the ribosome with GTP-bound translation factors. This chain is Large ribosomal subunit protein uL10, found in Rhizobium leguminosarum bv. trifolii (strain WSM2304).